Here is a 394-residue protein sequence, read N- to C-terminus: Tryptophan synthase beta chain (394 aa).

The residue at position 84 (K84) is an N6-(pyridoxal phosphate)lysine.

Belongs to the TrpB family. Tetramer of two alpha and two beta chains. Pyridoxal 5'-phosphate is required as a cofactor.

It carries out the reaction (1S,2R)-1-C-(indol-3-yl)glycerol 3-phosphate + L-serine = D-glyceraldehyde 3-phosphate + L-tryptophan + H2O. Its pathway is amino-acid biosynthesis; L-tryptophan biosynthesis; L-tryptophan from chorismate: step 5/5. Functionally, the beta subunit is responsible for the synthesis of L-tryptophan from indole and L-serine. This chain is Tryptophan synthase beta chain, found in Clostridium acetobutylicum (strain ATCC 824 / DSM 792 / JCM 1419 / IAM 19013 / LMG 5710 / NBRC 13948 / NRRL B-527 / VKM B-1787 / 2291 / W).